A 406-amino-acid polypeptide reads, in one-letter code: Multifunctional CCA protein (406 aa).

Residues Gly-8 and Arg-11 each coordinate ATP. CTP-binding residues include Gly-8 and Arg-11. Asp-21 and Asp-23 together coordinate Mg(2+). Residues Arg-91, Arg-137, and Arg-140 each contribute to the ATP site. The CTP site is built by Arg-91, Arg-137, and Arg-140. Positions 228–329 constitute an HD domain; the sequence is TGIHTLMVAQ…IKILNKFDVW (102 aa).

The protein belongs to the tRNA nucleotidyltransferase/poly(A) polymerase family. Bacterial CCA-adding enzyme type 1 subfamily. In terms of assembly, monomer. Can also form homodimers and oligomers. Mg(2+) is required as a cofactor. It depends on Ni(2+) as a cofactor.

It catalyses the reaction a tRNA precursor + 2 CTP + ATP = a tRNA with a 3' CCA end + 3 diphosphate. The enzyme catalyses a tRNA with a 3' CCA end + 2 CTP + ATP = a tRNA with a 3' CCACCA end + 3 diphosphate. Catalyzes the addition and repair of the essential 3'-terminal CCA sequence in tRNAs without using a nucleic acid template. Adds these three nucleotides in the order of C, C, and A to the tRNA nucleotide-73, using CTP and ATP as substrates and producing inorganic pyrophosphate. tRNA 3'-terminal CCA addition is required both for tRNA processing and repair. Also involved in tRNA surveillance by mediating tandem CCA addition to generate a CCACCA at the 3' terminus of unstable tRNAs. While stable tRNAs receive only 3'-terminal CCA, unstable tRNAs are marked with CCACCA and rapidly degraded. The sequence is that of Multifunctional CCA protein from Vibrio campbellii (strain ATCC BAA-1116).